The sequence spans 1354 residues: Rho-associated protein kinase 1 (1354 aa).

Serine 2 bears the N-acetylserine mark. In terms of domain architecture, Protein kinase spans 76-338 (YEVVKVIGRG…VEEIKRHLFF (263 aa)). ATP-binding positions include 82-90 (IGRGAFGEV) and lysine 105. Aspartate 198 (proton acceptor) is an active-site residue. The AGC-kinase C-terminal domain occupies 341–409 (DQWAWETLRD…YSNRRYLSSA (69 aa)). Residues 368 to 727 (FDDLEEDKGE…KKLKEEREAR (360 aa)) form an interaction with FHOD1 region. Residues 422-692 (KSLQESLQKT…RLEQEVNEHK (271 aa)) adopt a coiled-coil conformation. In terms of domain architecture, REM-1 spans 479 to 556 (STVSQIEKEK…LEEANDLLRT (78 aa)). Position 647 is an N6-acetyllysine (lysine 647). The SHROOM3 binding stretch occupies residues 707–946 (EAKSVAMCEM…TVSRLEEANS (240 aa)). A RhoBD domain is found at 949 to 1015 (TKDIEILRRE…LAEIMNRKDF (67 aa)). Positions 998-1010 (LKTQAVNKLAEIM) are RHOA binding. A coiled-coil region spans residues 1011–1102 (NRKDFKIDRK…KLLDLSDSTS (92 aa)). Phosphoserine occurs at positions 1105 and 1108. The interval 1115 to 1354 (NLPESRIEGW…VVKNTSGKTS (240 aa)) is auto-inhibitory. Residues 1118-1317 (ESRIEGWLSV…WVTHLVKKIP (200 aa)) form the PH domain. Residues 1228–1281 (GHEFIPTLYHFPANCDACAKPLWHVFKPPPALECRRCHVKCHRDHLDKKEDLIC) form a Phorbol-ester/DAG-type zinc finger. The interval 1320–1354 (PPSGFVRASPRTLSTRSTANQSFRKVVKNTSGKTS) is disordered. Position 1328 is a phosphoserine (serine 1328). Over residues 1330–1354 (RTLSTRSTANQSFRKVVKNTSGKTS) the composition is skewed to polar residues.

This sequence belongs to the protein kinase superfamily. AGC Ser/Thr protein kinase family. As to quaternary structure, homodimer. Interacts with RHOB, RHOC, MYLC2B and PTEN. Interacts with ITGB1BP1 (via N-terminus and PTB domain). Interacts with RHOA (activated by GTP), CHORDC1, DAPK3, GEM, JIP3, RHOE, PPP1R12A, PFN1, LIMK1, LIMK2 and TSG101. Interacts with FHOD1 in a Src-dependent manner. Interacts with SHROOM3. Mg(2+) serves as cofactor. In terms of processing, autophosphorylated on serine and threonine residues. Post-translationally, cleaved by caspase-3 during apoptosis. This leads to constitutive activation of the kinase and membrane blebbing. As to expression, detected in blood platelets.

Its subcellular location is the cytoplasm. The protein localises to the cytoskeleton. It localises to the microtubule organizing center. It is found in the centrosome. The protein resides in the centriole. Its subcellular location is the golgi apparatus membrane. The protein localises to the cell projection. It localises to the bleb. It is found in the cell membrane. The protein resides in the lamellipodium. Its subcellular location is the ruffle. It carries out the reaction L-seryl-[protein] + ATP = O-phospho-L-seryl-[protein] + ADP + H(+). It catalyses the reaction L-threonyl-[protein] + ATP = O-phospho-L-threonyl-[protein] + ADP + H(+). Activated by RHOA binding. Inhibited by Y-27632. Its function is as follows. Protein kinase which is a key regulator of the actin cytoskeleton and cell polarity. Involved in regulation of smooth muscle contraction, actin cytoskeleton organization, stress fiber and focal adhesion formation, neurite retraction, cell adhesion and motility via phosphorylation of DAPK3, GFAP, LIMK1, LIMK2, MYL9/MLC2, TPPP, PFN1 and PPP1R12A. Phosphorylates FHOD1 and acts synergistically with it to promote SRC-dependent non-apoptotic plasma membrane blebbing. Phosphorylates JIP3 and regulates the recruitment of JNK to JIP3 upon UVB-induced stress. Acts as a suppressor of inflammatory cell migration by regulating PTEN phosphorylation and stability. Acts as a negative regulator of VEGF-induced angiogenic endothelial cell activation. Required for centrosome positioning and centrosome-dependent exit from mitosis. Plays a role in terminal erythroid differentiation. Inhibits podocyte motility via regulation of actin cytoskeletal dynamics and phosphorylation of CFL1. Promotes keratinocyte terminal differentiation. Involved in osteoblast compaction through the fibronectin fibrillogenesis cell-mediated matrix assembly process, essential for osteoblast mineralization. May regulate closure of the eyelids and ventral body wall by inducing the assembly of actomyosin bundles. The polypeptide is Rho-associated protein kinase 1 (ROCK1) (Homo sapiens (Human)).